A 335-amino-acid polypeptide reads, in one-letter code: Probable nicotianamine synthase 3 (335 aa).

The protein belongs to the nicotianamine synthase (NAS)-like family.

The catalysed reaction is 3 S-adenosyl-L-methionine = nicotianamine + 3 S-methyl-5'-thioadenosine + 3 H(+). In terms of biological role, synthesizes nicotianamine, a polyamine that is the first intermediate in the synthesis of the phytosiderophores of the mugineic acid type found in gramineae which serves as a sensor for the physiological iron status within the plant, and/or might be involved in the transport of iron. The chain is Probable nicotianamine synthase 3 (NAS3) from Hordeum vulgare (Barley).